The primary structure comprises 192 residues: Probable thymidylate kinase (192 aa).

Position 8-15 (8-15) interacts with ATP; it reads GIDGSGKS.

This sequence belongs to the thymidylate kinase family.

The enzyme catalyses dTMP + ATP = dTDP + ADP. The sequence is that of Probable thymidylate kinase from Pyrobaculum aerophilum (strain ATCC 51768 / DSM 7523 / JCM 9630 / CIP 104966 / NBRC 100827 / IM2).